The sequence spans 617 residues: Chaperone protein DnaK (617 aa).

The residue at position 174 (threonine 174) is a Phosphothreonine; by autocatalysis. Over residues 575 to 592 (AQAQQQAQQQAQGQQGAQ) the composition is skewed to low complexity. The interval 575–617 (AQAQQQAQQQAQGQQGAQTDNQTGQNDGKTIDVDYEEVDDDDK) is disordered. The segment covering 593 to 602 (TDNQTGQNDG) has biased composition (polar residues). Acidic residues predominate over residues 607–617 (VDYEEVDDDDK).

Belongs to the heat shock protein 70 family.

Acts as a chaperone. The protein is Chaperone protein DnaK of Halothermothrix orenii (strain H 168 / OCM 544 / DSM 9562).